We begin with the raw amino-acid sequence, 359 residues long: MEQQNKRGLKRKALLGGVLGLGGLAMAGCEVAPPGGVLGDFLRMGWPDGITPEAVAMGNFWSWVWVAAWIIGIIMWGLFLTAIFAWGAKRAEKRGEGEFPKQLQYNVPLELVLTIVPIIIVMVLFFFTVQTQDKVTALDKNPEVTVDVTAYQWNWKFGYSEIDGSLAPGGQDYQGSDPERQAAAEASKKDPSGDNPIHGNSKSDVSYLEFNRIETLGTTDEIPVMVLPVNTPIEFNLASADVAHSFWVPEFLFKRDAYAHPEANKSQRVFQIEEITEEGAFVGRCAEMCGTYHAMMNFELRVVDRDSFAEYISFRDSNPDATNAQALEHIGQAPYATSTSPFVSDRTATRDGENTQSNA.

The first 28 residues, 1-28, serve as a signal peptide directing secretion; the sequence is MEQQNKRGLKRKALLGGVLGLGGLAMAG. Cys-29 is lipidated: S-diacylglycerol cysteine. The next 2 membrane-spanning stretches (helical) occupy residues 64–84 and 107–127; these read VWVAAWIIGIIMWGLFLTAIF and VPLELVLTIVPIIIVMVLFFF. The segment at 168–203 is disordered; sequence PGGQDYQGSDPERQAAAEASKKDPSGDNPIHGNSKS. The span at 177 to 192 shows a compositional bias: basic and acidic residues; that stretch reads DPERQAAAEASKKDPS. Residues His-244, Cys-285, Glu-287, Cys-289, His-293, and Met-296 each contribute to the Cu cation site. Residues 335 to 359 form a disordered region; sequence YATSTSPFVSDRTATRDGENTQSNA.

Associates with subunits I, III and IV to form cytochrome c oxidase. The 4 subunit cytochrome c oxidase forms a supercomplex with the menaquinol-cytochrome c reductase complex (cytochrome bc1). Requires binuclear copper center (CuA) as cofactor.

Its subcellular location is the cell membrane. The catalysed reaction is 4 Fe(II)-[cytochrome c] + O2 + 8 H(+)(in) = 4 Fe(III)-[cytochrome c] + 2 H2O + 4 H(+)(out). Subunits I and II form the functional core of the enzyme complex. Electrons originating in cytochrome c are transferred via heme a and Cu(A) to the binuclear center formed by heme a3 and Cu(B). This is Cytochrome c oxidase subunit 2 (ctaC) from Corynebacterium glutamicum (strain ATCC 13032 / DSM 20300 / JCM 1318 / BCRC 11384 / CCUG 27702 / LMG 3730 / NBRC 12168 / NCIMB 10025 / NRRL B-2784 / 534).